We begin with the raw amino-acid sequence, 526 residues long: MGKIIKSLSRFGKKVGNALTSNTAKKIYSTIGKAAERFAESEIGAATIDGLVQGSVHSIITGESYGESVKQAVLLNVLGTGEELPDPLSPGERGMQTKIKELEDEQRNELVRLKYNKEITEKFGKELGEVYDFMNGEAKEVEAVEEQYTMLCKAVDSYEKILKEEDSKMAILARALQREAAERSEDEIKMVKEYRQKIDALKSAIEIERDGMQEEAIQEIAGMTADVLEAASEEVPLIGAGMATAVATGRAIEGAYKLKKVINALSGIDLSHMRSPKIEPTIIATTLEHRFKDIPDEQLAISVLNKKTAVADNCNEIAHIKQEILPKFKQIMNEEKEIEGIEDKVIHPRVMMRFKIPRTQQPQIHIYAAPWDSDDVFFFHCVSYHHRNESFFLGFDLGIDVVHFEDLTSHWHALGMAQEASGRTLTEAYREFLNLSISSTFSSAIHARRMIRSRAVHPIFLGSMHYDITYEALKNNAQRIVYDDELQMHILRGPLHFQRRAILGALKFGVKILGDKIDVPLFLRNA.

Residues 1–42 (MGKIIKSLSRFGKKVGNALTSNTAKKIYSTIGKAAERFAESE) form an involved in membrane permeabilization region.

The protein belongs to the orbivirus VP5 family.

The protein localises to the virion. Its function is as follows. VP5 protein is one of the two proteins (with VP2) which constitute the virus particle outer capsid. Acts as a membrane permeabilization protein that mediates release of viral particles from endosomal compartments into the cytoplasm. Permeabilization activity is probably negatively regulated by VP2 and is triggered by endosomal degradation of VP2 and exposure to low pH. The protein is Outer capsid protein VP5 (Segment-6) of Antilocapra americana (Pronghorn).